We begin with the raw amino-acid sequence, 120 residues long: Aspartate 1-decarboxylase (120 aa).

Residue serine 25 is the Schiff-base intermediate with substrate; via pyruvic acid of the active site. At serine 25 the chain carries Pyruvic acid (Ser). Threonine 57 contributes to the substrate binding site. Residue tyrosine 58 is the Proton donor of the active site. A substrate-binding site is contributed by 73 to 75 (GAA).

The protein belongs to the PanD family. In terms of assembly, heterooctamer of four alpha and four beta subunits. Pyruvate serves as cofactor. Is synthesized initially as an inactive proenzyme, which is activated by self-cleavage at a specific serine bond to produce a beta-subunit with a hydroxyl group at its C-terminus and an alpha-subunit with a pyruvoyl group at its N-terminus.

The protein localises to the cytoplasm. It catalyses the reaction L-aspartate + H(+) = beta-alanine + CO2. It functions in the pathway cofactor biosynthesis; (R)-pantothenate biosynthesis; beta-alanine from L-aspartate: step 1/1. Catalyzes the pyruvoyl-dependent decarboxylation of aspartate to produce beta-alanine. This chain is Aspartate 1-decarboxylase, found in Deinococcus geothermalis (strain DSM 11300 / CIP 105573 / AG-3a).